The primary structure comprises 297 residues: uncharacterized protein (297 aa).

Disordered regions lie at residues 12-43, 65-85, 122-151, and 265-297; these read QNNNNNTNNNNNNNNPKASILKNNNNDNTNDN, VPNSINVNTSSSGNKNGDKPI, KVSTTTTTTSSTSKPILPQTITKPNKTNET, and SRLSSNNNNNNNNNNNNNNNNSNLLFFFDDQNN. Residues 65–79 show a composition bias toward polar residues; sequence VPNSINVNTSSSGNK. A compositionally biased stretch (low complexity) spans 122-135; it reads KVSTTTTTTSSTSK. Polar residues predominate over residues 140 to 151; that stretch reads QTITKPNKTNET. Residues 268–287 show a composition bias toward low complexity; it reads SSNNNNNNNNNNNNNNNNSN.

This is an uncharacterized protein from Dictyostelium discoideum (Social amoeba).